The chain runs to 297 residues: Acetyl-coenzyme A carboxylase carboxyl transferase subunit beta (297 aa).

The 270-residue stretch at 27-296 (LWHKCPACEA…PEQAREAAAV (270 aa)) folds into the CoA carboxyltransferase N-terminal domain. 4 residues coordinate Zn(2+): Cys31, Cys34, Cys50, and Cys53. Residues 31 to 53 (CPACEAVLYRPELEKTLDVCPKC) form a C4-type zinc finger.

Belongs to the AccD/PCCB family. As to quaternary structure, acetyl-CoA carboxylase is a heterohexamer composed of biotin carboxyl carrier protein (AccB), biotin carboxylase (AccC) and two subunits each of ACCase subunit alpha (AccA) and ACCase subunit beta (AccD). Zn(2+) is required as a cofactor.

It is found in the cytoplasm. It carries out the reaction N(6)-carboxybiotinyl-L-lysyl-[protein] + acetyl-CoA = N(6)-biotinyl-L-lysyl-[protein] + malonyl-CoA. It functions in the pathway lipid metabolism; malonyl-CoA biosynthesis; malonyl-CoA from acetyl-CoA: step 1/1. Component of the acetyl coenzyme A carboxylase (ACC) complex. Biotin carboxylase (BC) catalyzes the carboxylation of biotin on its carrier protein (BCCP) and then the CO(2) group is transferred by the transcarboxylase to acetyl-CoA to form malonyl-CoA. The polypeptide is Acetyl-coenzyme A carboxylase carboxyl transferase subunit beta (Pseudomonas putida (strain W619)).